A 480-amino-acid polypeptide reads, in one-letter code: Gamma-aminobutyric acid receptor subunit rho-1 (480 aa).

An N-terminal signal peptide occupies residues 1–21 (MLAVRNMKFGIFLLWWGWVLA). Residues 22–281 (AESTVHWPGR…LYINFTLRRH (260 aa)) are Extracellular-facing. A disordered region spans residues 31-67 (REVHEPSKKGSRPQRQRRGAHDDAHKQGSPILKRSSD). Basic residues predominate over residues 39–48 (KGSRPQRQRR). Arg-126 contacts 4-aminobutanoate. Asn-141 is a glycosylation site (N-linked (GlcNAc...) asparagine). Residue Ser-190 participates in 4-aminobutanoate binding. The cysteines at positions 199 and 213 are disulfide-linked. Glu-218 is a 4-aminobutanoate binding site. Asn-235 and Asn-275 each carry an N-linked (GlcNAc...) asparagine glycan. A helical membrane pass occupies residues 282–302 (IFFFLLQTYFPATLMVMLSWV). At 303 to 314 (SFWIDRRAVPAR) the chain is on the cytoplasmic side. Residues 315 to 335 (VPLGITTVLTMSTIITGVNAS) traverse the membrane as a helical segment. Topologically, residues 336-346 (MPRVSYIKAVD) are extracellular. Residues 347-367 (IYLWVSFVFVFLSVLEYAAVN) form a helical membrane-spanning segment. Topologically, residues 368–458 (YLTTVQERKE…MRINTHAIDK (91 aa)) are cytoplasmic. Residues 459–479 (YSRIIFPAAYILFNLIYWSIF) traverse the membrane as a helical segment. Residue Ser-480 is a topological domain, extracellular.

Belongs to the ligand-gated ion channel (TC 1.A.9) family. Gamma-aminobutyric acid receptor (TC 1.A.9.5) subfamily. GABRR1 sub-subfamily. In terms of assembly, three rho subunits (rho-1/GBRR1, rho-2/GBRR2 and rho-3/GBRR3) coassemble either to form functional homopentamers or heteropentamers. Rho-1/GBRR1 subunits can also associate with alpha-1/GBRA1 subunits to form a functional GABAAR. Interacts with SQSTM1.

The protein localises to the postsynaptic cell membrane. It localises to the cell membrane. It catalyses the reaction chloride(in) = chloride(out). With respect to regulation, inhibited by TPMPA, a rho-specific antagonist. Inhibited by picrotoxin, when forming a homopentamer. In contrast with other GABAARs, rho-1 GABAAR is not inhibited by bicuculline, when forming a homopentamer. Down-regulated by external protons when forming a homopentamer. Its function is as follows. Rho subunit of the pentameric ligand-gated chloride channels responsible for mediating the effects of gamma-aminobutyric acid (GABA), the major inhibitory neurotransmitter in the brain. Rho-containing GABA-gated chloride channels are a subclass of GABA(A) receptors (GABAARs) entirely composed of rho subunits, where GABA molecules bind at the rho intersubunit interfaces. When activated by GABA, rho-GABAARs selectively allow the flow of chloride anions across the cell membrane down their electrochemical gradient. Rho-1 subunits are primarily expressed in retina where rho-1-containing GABAARs may play a role in retinal neurotransmission. Rho-1 GABAARs are also involved in neuronal tonic (extrasynaptic) and phasic (synaptic) transmission in the Purkinje neurons of the cerebellum. Rho-1 GABAARs may also contribute to the regulation of glial development in the cerebellum by controlling extrasynaptic transmission. This Rattus norvegicus (Rat) protein is Gamma-aminobutyric acid receptor subunit rho-1.